A 42-amino-acid chain; its full sequence is Omega-theraphotoxin-Asp3a (42 aa).

3 disulfide bridges follow: cysteine 1/cysteine 16, cysteine 8/cysteine 21, and cysteine 15/cysteine 30.

This sequence belongs to the neurotoxin 14 (magi-1) family. 08 (Ltx-4) subfamily. As to expression, expressed by the venom gland.

The protein localises to the secreted. In terms of biological role, inhibits voltage-gated calcium channels (Cav) in rat cerebellar granule cells. This Aphonopelma sp. (American tarantula) protein is Omega-theraphotoxin-Asp3a.